A 72-amino-acid polypeptide reads, in one-letter code: Translation initiation factor IF-1 (72 aa).

An S1-like domain is found at 2–72; the sequence is AKEDCIEMQG…NKGRIIFRSR (71 aa).

Belongs to the IF-1 family. In terms of assembly, component of the 30S ribosomal translation pre-initiation complex which assembles on the 30S ribosome in the order IF-2 and IF-3, IF-1 and N-formylmethionyl-tRNA(fMet); mRNA recruitment can occur at any time during PIC assembly.

Its subcellular location is the cytoplasm. One of the essential components for the initiation of protein synthesis. Stabilizes the binding of IF-2 and IF-3 on the 30S subunit to which N-formylmethionyl-tRNA(fMet) subsequently binds. Helps modulate mRNA selection, yielding the 30S pre-initiation complex (PIC). Upon addition of the 50S ribosomal subunit IF-1, IF-2 and IF-3 are released leaving the mature 70S translation initiation complex. This Pasteurella multocida (strain Pm70) protein is Translation initiation factor IF-1.